The following is a 317-amino-acid chain: Tricarboxylate transport protein B, mitochondrial (317 aa).

A propeptide spans 1–20 (removed in mature form); that stretch reads MSGSPKFVSPFHRPHCLSAA. Solcar repeat units lie at residues 29–117, 128–214, and 224–309; these read THPG…LSNQ, TRGL…LRNW, and INPV…VVKV. The next 4 helical transmembrane spans lie at 35 to 55, 130 to 150, 223 to 243, and 294 to 314; these read ILAGGIAGGIEICITFPTEYV, GLICGLGAGVAEAVVVVCPME, SINPVVTGLFGAVAGAASVFG, and MDVAIVFIIYEEVVKVLNKVW.

The protein belongs to the mitochondrial carrier (TC 2.A.29) family. In terms of processing, possesses a short cleavable presequence, which, however, is found to be dispensable both for targeting to mitochondria and insertion into the inner membrane. However, the presequence is required to keep SLC25A1 in a soluble state and thus in an import-competent state. Mature SLC25A1 lacking the presequence is prone to aggregation.

The protein resides in the mitochondrion inner membrane. It catalyses the reaction (S)-malate(in) + citrate(out) = (S)-malate(out) + citrate(in). The enzyme catalyses D-threo-isocitrate(in) + citrate(out) = D-threo-isocitrate(out) + citrate(in). It carries out the reaction citrate(out) + succinate(in) = citrate(in) + succinate(out). The catalysed reaction is cis-aconitate(in) + citrate(out) = cis-aconitate(out) + citrate(in). It catalyses the reaction trans-aconitate(in) + citrate(out) = trans-aconitate(out) + citrate(in). The enzyme catalyses phosphoenolpyruvate(in) + citrate(out) = phosphoenolpyruvate(out) + citrate(in). It carries out the reaction maleate(in) + citrate(out) = maleate(out) + citrate(in). Functionally, mitochondrial electroneutral antiporter that exports citrate from the mitochondria into the cytosol in exchange for malate. Also able to mediate the exchange of citrate for isocitrate, phosphoenolpyruvate, cis-aconitate and to a lesser extent trans-aconitate, maleate and succinate. In the cytoplasm, citrate plays important roles in fatty acid and sterol synthesis, regulation of glycolysis, protein acetylation, and other physiopathological processes. The protein is Tricarboxylate transport protein B, mitochondrial of Danio rerio (Zebrafish).